The primary structure comprises 185 residues: Ribosome-recycling factor (185 aa).

It belongs to the RRF family.

The protein resides in the cytoplasm. Responsible for the release of ribosomes from messenger RNA at the termination of protein biosynthesis. May increase the efficiency of translation by recycling ribosomes from one round of translation to another. The chain is Ribosome-recycling factor from Geobacter sulfurreducens (strain ATCC 51573 / DSM 12127 / PCA).